The following is a 136-amino-acid chain: MLQPKRMKFRKMFKGRNRGLANGTEVSFGEFGLKAVGRGRLTARQIEAARRAMTRHIKRQGQIWIRVFPDKPITSKPLEVRMGKGKGNVEYWVCQIQPGKVLYEMNGVSEELAREAFTLAAAKLPLKTTFVTKSVM.

This sequence belongs to the universal ribosomal protein uL16 family. Part of the 50S ribosomal subunit.

Binds 23S rRNA and is also seen to make contacts with the A and possibly P site tRNAs. This chain is Large ribosomal subunit protein uL16, found in Shewanella pealeana (strain ATCC 700345 / ANG-SQ1).